Here is a 323-residue protein sequence, read N- to C-terminus: MLEQGYHLYEAVQFLAIHAPSSAQKKMNAMLMDLRSGYPLHKALDHLQLPQDVQLLLYVSERNGDLAQGFRKSGELFKKREEMKRKWEGAMRYPLLLIIVTLLLMFILMYFVLPHHQTLYRSLQIELPVITKLVIACSEKLPWLFTAFFVVAILLVLTYFVTFHRFPPTKKVTVLLRIPGLSQWTKEVITCLFCLTLGGLLKGGLSIMEALSICKEQDFFLFFRSEGEEMMLELENGERLYECLRRRPHYLKELPFVVENGEKTGNLAKDLLYFSDYQLEEFERRVKKWLVAIQPIVFSMIGAVILVLFLAMMLPVFQMIGAI.

Helical transmembrane passes span 93-113 (YPLL…YFVL), 141-161 (LPWL…TYFV), 188-208 (VITC…LSIM), and 296-316 (IVFS…MLPV).

The protein belongs to the GSP F family.

The protein localises to the cell membrane. Functionally, required for transformation and DNA binding. The chain is ComG operon protein 2 homolog (comGB) from Halalkalibacterium halodurans (strain ATCC BAA-125 / DSM 18197 / FERM 7344 / JCM 9153 / C-125) (Bacillus halodurans).